A 188-amino-acid chain; its full sequence is Trafficking protein particle complex subunit 5 (188 aa).

Serine 10 carries the post-translational modification Phosphoserine.

It belongs to the TRAPP small subunits family. BET3 subfamily. Component of the multisubunit TRAPP (transport protein particle) complex, which includes at least TRAPPC2, TRAPPC2L, TRAPPC3, TRAPPC3L, TRAPPC4, TRAPPC5, TRAPPC8, TRAPPC9, TRAPPC10, TRAPPC11 and TRAPPC12.

Its subcellular location is the golgi apparatus. The protein localises to the cis-Golgi network. It is found in the endoplasmic reticulum. Its function is as follows. May play a role in vesicular transport from endoplasmic reticulum to Golgi. In Homo sapiens (Human), this protein is Trafficking protein particle complex subunit 5 (TRAPPC5).